The following is a 175-amino-acid chain: Shikimate kinase (175 aa).

Position 16-21 (16-21 (GAGKST)) interacts with ATP. Ser-20 lines the Mg(2+) pocket. The substrate site is built by Asp-38, Arg-62, and Gly-84. An ATP-binding site is contributed by Arg-122. Arg-141 serves as a coordination point for substrate.

The protein belongs to the shikimate kinase family. In terms of assembly, monomer. The cofactor is Mg(2+).

The protein localises to the cytoplasm. The enzyme catalyses shikimate + ATP = 3-phosphoshikimate + ADP + H(+). It functions in the pathway metabolic intermediate biosynthesis; chorismate biosynthesis; chorismate from D-erythrose 4-phosphate and phosphoenolpyruvate: step 5/7. Catalyzes the specific phosphorylation of the 3-hydroxyl group of shikimic acid using ATP as a cosubstrate. This chain is Shikimate kinase, found in Legionella pneumophila (strain Paris).